Reading from the N-terminus, the 452-residue chain is NADH-ubiquinone oxidoreductase chain 4 (452 aa).

The next 14 membrane-spanning stretches (helical) occupy residues 4–24, 29–49, 59–79, 88–110, 114–136, 144–164, 182–202, 221–241, 252–272, 282–304, 309–331, 345–365, 390–410, and 432–452; these read LVLGYVGLVIGVIVTKKSMVW, VGSVLLMLPATVLVNMNMTIS, FVSLGLTVLSIWLLPLMLLAS, LIYQRVFVGCQVFLTGALVLAFM, LLLFYIAFESTLLPTLMLITRWG, AGTYFMFFTLVGSLPLLICLI, VFQLSYLVNFWWVGCILAFLV, PIAGSMVLAGVLLKLGGYGMM, MLSSEVFLALALWGIVVMGGI, LIAYSSVGHMALVVGGVLTGVAW, AMVLMIAHGLVSSCLFCLANLWY, LIMIFPLISLGWFLMSLMNMA, IVYMSLGAVLTAAYSLYLFGM, and LLTTLHLVPAIYLIFYLGLMF.

The protein belongs to the complex I subunit 4 family.

The protein resides in the mitochondrion membrane. It carries out the reaction a ubiquinone + NADH + 5 H(+)(in) = a ubiquinol + NAD(+) + 4 H(+)(out). In terms of biological role, core subunit of the mitochondrial membrane respiratory chain NADH dehydrogenase (Complex I) that is believed to belong to the minimal assembly required for catalysis. Complex I functions in the transfer of electrons from NADH to the respiratory chain. The immediate electron acceptor for the enzyme is believed to be ubiquinone. This Branchiostoma lanceolatum (Common lancelet) protein is NADH-ubiquinone oxidoreductase chain 4 (ND4).